Consider the following 222-residue polypeptide: Putative N-acetylmannosamine-6-phosphate 2-epimerase (222 aa).

This sequence belongs to the NanE family.

It carries out the reaction an N-acyl-D-glucosamine 6-phosphate = an N-acyl-D-mannosamine 6-phosphate. Its pathway is amino-sugar metabolism; N-acetylneuraminate degradation; D-fructose 6-phosphate from N-acetylneuraminate: step 3/5. Functionally, converts N-acetylmannosamine-6-phosphate (ManNAc-6-P) to N-acetylglucosamine-6-phosphate (GlcNAc-6-P). This is Putative N-acetylmannosamine-6-phosphate 2-epimerase from Oceanobacillus iheyensis (strain DSM 14371 / CIP 107618 / JCM 11309 / KCTC 3954 / HTE831).